Here is a 365-residue protein sequence, read N- to C-terminus: MGKVHRPRRGSLGFSPRKRAKSIVPRIRSWPKETEVRMLGFAGYKAGMTHILMIDDEPGLTNGKEIFMPVTIIETPPLRVFGIRAYRMGYLGLETATEVIVPDFPLDNYPAKERKGKPKPKMTFYKLLERRIATLPKNYTQEMFEQKLGQLEDMIKEGEIVDVRAIVATQPWVIKLKKKPEVMEYAIGGTSVEEKFNYIKEKLGKELRVGEVLKEGELLDVIAVTKGKGTQGPVKRWGIKLRAHKDSKGRRKVGSIGPWHPARVMWTVPMAGQMGFHHRTELNKRLIAIGENGKLKLDENTEIEITPKGGFPHYGIVRSDFMMIAGSVPGAIKRIIRVRPAIRPPKKKPPVQRPQITYVSVESKQ.

Residues 343-365 (RPPKKKPPVQRPQITYVSVESKQ) are disordered. Residues 354–365 (PQITYVSVESKQ) are compositionally biased toward polar residues.

The protein belongs to the universal ribosomal protein uL3 family. As to quaternary structure, part of the 50S ribosomal subunit. Forms a cluster with proteins L14 and L24e.

Its function is as follows. One of the primary rRNA binding proteins, it binds directly near the 3'-end of the 23S rRNA, where it nucleates assembly of the 50S subunit. The chain is Large ribosomal subunit protein uL3 from Pyrococcus furiosus (strain ATCC 43587 / DSM 3638 / JCM 8422 / Vc1).